The following is a 281-amino-acid chain: MAARVLLARGGLLRPAAQSAFLPGLRTVTSSSHRAREDSWLKSLFVRKVDPRKDAHSNLLAKKETSSLYKLQFHNVKPECLDAYNKICQEVLPKIHEGKQYPCTLVGTWNTWYGEQDQAVHLWRYEGGYPALTEVMNKLKENQEFVNFRKARSDMLLSRKNQLLLEFSFWNEPVPRPGPNIYELRSYQLRPGTMIEWGNYWARAIRFRQDSNEAIGGFFSQIGQLYMVDHLWAYRDLQTREDIRNAAWHKHGWEELVYYTVPLIQEMESRIMIPLKTSPLQ.

A mitochondrion-targeting transit peptide spans 1 to 27 (MAARVLLARGGLLRPAAQSAFLPGLRT).

Belongs to the NipSnap family. Interacts with CALCOCO2/NDP52, NBR1, SQSTM1/p62, TAX1BP1 and WDFY3/ALFY. Interacts with ATG8 family proteins (MAP1LC3A, MAP1LC3B, MAP1LC3C, GABARAP, GABARAPL1 and GABARAPL2). Interacts with VDAC1.

Its subcellular location is the mitochondrion matrix. It localises to the cytoplasm. Protein involved in mitophagy by facilitating recruitment of the autophagy machinery required for clearance of damaged mitochondria. Accumulates on the mitochondria surface in response to mitochondrial depolarization and acts as a 'eat me' signal by recruiting proteins involved in selective autophagy, such as autophagy receptors (CALCOCO2/NDP52, NBR1, SQSTM1/p62, TAX1BP1 and WDFY3/ALFY) and ATG8 family proteins (MAP1LC3A, MAP1LC3B, MAP1LC3C, GABARAP, GABARAPL1 and GABARAPL2). May act as a positive regulator of L-type calcium channels. The polypeptide is Protein NipSnap homolog 2 (Mus musculus (Mouse)).